Reading from the N-terminus, the 170-residue chain is Calcineurin subunit B type 1 (170 aa).

4 consecutive EF-hand domains span residues 18-46 (DEIRRLGKRFRKLDLDNSGALSIDEFMSL), 50-85 (QQNPLVQRVIDIFDADGNGEVDFKEFIQGVSQFSVR), 87-122 (DKLSKLRFAFRIYDMDNDGYISNGELFQVLKMMVGN), and 128-163 (QLQQIVDKTICFADKDEDGKISFDEFCSVVGNTDIH). Positions 31, 33, 35, 42, 63, 65, 67, 69, 74, 100, 102, 104, 106, 111, 141, 143, 145, 147, and 152 each coordinate Ca(2+).

This sequence belongs to the calcineurin regulatory subunit family. In terms of assembly, composed of two components (A and B), the A component is the catalytic subunit and the B component confers calcium sensitivity.

In terms of biological role, calcineurin is a calcium-binding and calmodulin-binding protein found in all cells from yeast to mammals, and a calcium-dependent, calmodulin-stimulated protein phosphatase. The sequence is that of Calcineurin subunit B type 1 (CanB) from Drosophila melanogaster (Fruit fly).